Consider the following 207-residue polypeptide: MPKVALYNQNGSTAGDIELNASVFGIEPNESVVFDAILMQRASLRQGTHKVKNRSEVRGGGRKPWRQKGTGRARQGSIRSPQWRGGGVVFGPTPRSYSYKLPKKVRRLAIKSVLSSKVIDNNIIVLEDLTLDTAKTKEMAAILKGLSVEKKALIVTADANEAVALSARNIPGVTVVEANGINVLDVVNHEKLLITKAAVEKVEEVLA.

The interval 48–85 is disordered; sequence THKVKNRSEVRGGGRKPWRQKGTGRARQGSIRSPQWRG. Over residues 60–71 the composition is skewed to basic residues; that stretch reads GGRKPWRQKGTG.

The protein belongs to the universal ribosomal protein uL4 family. As to quaternary structure, part of the 50S ribosomal subunit.

One of the primary rRNA binding proteins, this protein initially binds near the 5'-end of the 23S rRNA. It is important during the early stages of 50S assembly. It makes multiple contacts with different domains of the 23S rRNA in the assembled 50S subunit and ribosome. Functionally, forms part of the polypeptide exit tunnel. The chain is Large ribosomal subunit protein uL4 from Bacillus subtilis (strain 168).